Here is a 216-residue protein sequence, read N- to C-terminus: NADH dehydrogenase [ubiquinone] iron-sulfur protein 7, mitochondrial (216 aa).

A mitochondrion-targeting transit peptide spans 1-37 (MAALAALRLLHPILAVRSGVGAALQVRGVHSSMAADS). [4Fe-4S] cluster-binding residues include Cys91 and Cys92. Arg114 carries the post-translational modification Hydroxyarginine. [4Fe-4S] cluster contacts are provided by Cys156 and Cys186.

This sequence belongs to the complex I 20 kDa subunit family. Core subunit of respiratory chain NADH dehydrogenase (Complex I) which is composed of 45 different subunits. This is a component of the iron-sulfur (IP) fragment of the enzyme. The cofactor is [4Fe-4S] cluster. Hydroxylated ar Arg-114 by NDUFAF5 early in the pathway of assembly of complex I, before the formation of the juncture between peripheral and membrane arms.

It is found in the mitochondrion inner membrane. It carries out the reaction a ubiquinone + NADH + 5 H(+)(in) = a ubiquinol + NAD(+) + 4 H(+)(out). Functionally, core subunit of the mitochondrial membrane respiratory chain NADH dehydrogenase (Complex I) which catalyzes electron transfer from NADH through the respiratory chain, using ubiquinone as an electron acceptor. Essential for the catalytic activity of complex I. The sequence is that of NADH dehydrogenase [ubiquinone] iron-sulfur protein 7, mitochondrial (NDUFS7) from Bos taurus (Bovine).